The primary structure comprises 102 residues: Small ribosomal subunit protein uS10 (102 aa).

Belongs to the universal ribosomal protein uS10 family. Part of the 30S ribosomal subunit.

Involved in the binding of tRNA to the ribosomes. In Oenococcus oeni (strain ATCC BAA-331 / PSU-1), this protein is Small ribosomal subunit protein uS10.